The sequence spans 340 residues: UDP-3-O-acylglucosamine N-acyltransferase (340 aa).

Catalysis depends on histidine 240, which acts as the Proton acceptor.

Belongs to the transferase hexapeptide repeat family. LpxD subfamily. Homotrimer.

The enzyme catalyses a UDP-3-O-[(3R)-3-hydroxyacyl]-alpha-D-glucosamine + a (3R)-hydroxyacyl-[ACP] = a UDP-2-N,3-O-bis[(3R)-3-hydroxyacyl]-alpha-D-glucosamine + holo-[ACP] + H(+). It functions in the pathway bacterial outer membrane biogenesis; LPS lipid A biosynthesis. Catalyzes the N-acylation of UDP-3-O-acylglucosamine using 3-hydroxyacyl-ACP as the acyl donor. Is involved in the biosynthesis of lipid A, a phosphorylated glycolipid that anchors the lipopolysaccharide to the outer membrane of the cell. This chain is UDP-3-O-acylglucosamine N-acyltransferase, found in Pseudoalteromonas translucida (strain TAC 125).